A 568-amino-acid polypeptide reads, in one-letter code: Fumarate hydratase 2 (568 aa).

A [4Fe-4S] cluster-binding site is contributed by C133. (S)-malate is bound by residues 134–135 (QD), R173, G216, and 219–225 (NKAYLYQ). Residues C252 and C346 each coordinate [4Fe-4S] cluster. Residues R421, 467 to 471 (TTAGR), and K491 contribute to the (S)-malate site.

The protein belongs to the class-I fumarase family. In terms of assembly, homodimer. [4Fe-4S] cluster is required as a cofactor.

The protein resides in the cytoplasm. It localises to the cytosol. It carries out the reaction (S)-malate = fumarate + H2O. With respect to regulation, specifically and competitively inhibited by 2-thiomalate, which coordinates with the catalytic [4Fe-4S] cluster. Weakly inhibited by malonate. Its function is as follows. Cytosolic fumarate hydratase that catalyzes the reversible hydration of fumarate to (S)-malate. This chain is Fumarate hydratase 2, found in Leishmania major.